Here is a 431-residue protein sequence, read N- to C-terminus: Histidinol dehydrogenase (431 aa).

NAD(+) contacts are provided by tyrosine 127, glutamine 190, and asparagine 213. Serine 238, glutamine 260, and histidine 263 together coordinate substrate. Glutamine 260 and histidine 263 together coordinate Zn(2+). Residues glutamate 329 and histidine 330 each act as proton acceptor in the active site. Residues histidine 330, aspartate 363, glutamate 417, and histidine 422 each contribute to the substrate site. Aspartate 363 lines the Zn(2+) pocket. Position 422 (histidine 422) interacts with Zn(2+).

The protein belongs to the histidinol dehydrogenase family. It depends on Zn(2+) as a cofactor.

The catalysed reaction is L-histidinol + 2 NAD(+) + H2O = L-histidine + 2 NADH + 3 H(+). It participates in amino-acid biosynthesis; L-histidine biosynthesis; L-histidine from 5-phospho-alpha-D-ribose 1-diphosphate: step 9/9. Its function is as follows. Catalyzes the sequential NAD-dependent oxidations of L-histidinol to L-histidinaldehyde and then to L-histidine. The sequence is that of Histidinol dehydrogenase from Methanopyrus kandleri (strain AV19 / DSM 6324 / JCM 9639 / NBRC 100938).